We begin with the raw amino-acid sequence, 376 residues long: Chaperone protein DnaJ (376 aa).

The 68-residue stretch at 5-72 (DFYEVLGVPK…QKRAAYDQYG (68 aa)) folds into the J domain. The CR-type zinc finger occupies 136–214 (GKEAQIRIPS…CHGQGRVKKQ (79 aa)). The Zn(2+) site is built by Cys-149, Cys-152, Cys-166, Cys-169, Cys-188, Cys-191, Cys-202, and Cys-205. 4 CXXCXGXG motif repeats span residues 149–156 (CETCHGSG), 166–173 (CGTCQGSG), 188–195 (CPHCRGTG), and 202–209 (CTACHGQG). 2 disordered regions span residues 227-246 (DGMR…GGPP) and 354-376 (KKGG…SFFS). The span at 237-246 (GEPGTNGGPP) shows a compositional bias: gly residues. A compositionally biased stretch (basic and acidic residues) spans 367 to 376 (WTDRLKSFFS).

The protein belongs to the DnaJ family. As to quaternary structure, homodimer. It depends on Zn(2+) as a cofactor.

It is found in the cytoplasm. Participates actively in the response to hyperosmotic and heat shock by preventing the aggregation of stress-denatured proteins and by disaggregating proteins, also in an autonomous, DnaK-independent fashion. Unfolded proteins bind initially to DnaJ; upon interaction with the DnaJ-bound protein, DnaK hydrolyzes its bound ATP, resulting in the formation of a stable complex. GrpE releases ADP from DnaK; ATP binding to DnaK triggers the release of the substrate protein, thus completing the reaction cycle. Several rounds of ATP-dependent interactions between DnaJ, DnaK and GrpE are required for fully efficient folding. Also involved, together with DnaK and GrpE, in the DNA replication of plasmids through activation of initiation proteins. The sequence is that of Chaperone protein DnaJ from Acidovorax ebreus (strain TPSY) (Diaphorobacter sp. (strain TPSY)).